Consider the following 137-residue polypeptide: Basic phospholipase A2 beta-bungarotoxin A1 chain (137 aa).

The N-terminal stretch at 1–9 (AVCVSLLGA) is a signal peptide. A propeptide spanning residues 10–17 (ANIPPHPL) is cleaved from the precursor. Disulfide bonds link cysteine 44/cysteine 136, cysteine 46/cysteine 62, cysteine 61/cysteine 117, cysteine 68/cysteine 110, cysteine 78/cysteine 103, and cysteine 96/cysteine 108. Residues tyrosine 45, glycine 47, and glycine 49 each contribute to the Ca(2+) site. Histidine 65 is an active-site residue. Residue aspartate 66 participates in Ca(2+) binding. Residue aspartate 111 is part of the active site.

This sequence belongs to the phospholipase A2 family. Group I subfamily. D49 sub-subfamily. In terms of assembly, heterodimer; disulfide-linked. The A chain has phospholipase A2 activity and the B chain shows homology with the basic protease inhibitors. Ca(2+) is required as a cofactor. Expressed by the venom gland.

It is found in the secreted. The catalysed reaction is a 1,2-diacyl-sn-glycero-3-phosphocholine + H2O = a 1-acyl-sn-glycero-3-phosphocholine + a fatty acid + H(+). In terms of biological role, snake venom phospholipase A2 (PLA2) that shows presynaptic neurotoxicity. The A chain has phospholipase activity. PLA2 catalyzes the calcium-dependent hydrolysis of the 2-acyl groups in 3-sn-phosphoglycerides. The protein is Basic phospholipase A2 beta-bungarotoxin A1 chain of Bungarus candidus (Malayan krait).